The primary structure comprises 212 residues: Adenylate kinase (212 aa).

10 to 15 (GAGKGT) is an ATP binding site. The NMP stretch occupies residues 30–59 (STGDMFRAAMVNQTEMGVLAKSYIDKGELV). Residues T31, R36, 57-59 (ELV), 86-89 (GYPR), and Q93 contribute to the AMP site. An LID region spans residues 127–159 (GRIIHRVTGETFHKVFNPPVDYKEEDYYQREDD). ATP contacts are provided by residues R128 and 137–138 (TF). AMP-binding residues include R156 and R167. Position 195 (Q195) interacts with ATP.

It belongs to the adenylate kinase family. In terms of assembly, monomer.

The protein localises to the cytoplasm. It carries out the reaction AMP + ATP = 2 ADP. Its pathway is purine metabolism; AMP biosynthesis via salvage pathway; AMP from ADP: step 1/1. Its function is as follows. Catalyzes the reversible transfer of the terminal phosphate group between ATP and AMP. Plays an important role in cellular energy homeostasis and in adenine nucleotide metabolism. The polypeptide is Adenylate kinase (Streptococcus pneumoniae (strain 70585)).